Here is a 431-residue protein sequence, read N- to C-terminus: Enolase (431 aa).

Residue Q163 participates in (2R)-2-phosphoglycerate binding. E205 functions as the Proton donor in the catalytic mechanism. Positions 242, 283, and 310 each coordinate Mg(2+). The (2R)-2-phosphoglycerate site is built by K335, R364, S365, and K386. Catalysis depends on K335, which acts as the Proton acceptor.

It belongs to the enolase family. The cofactor is Mg(2+).

It is found in the cytoplasm. It localises to the secreted. The protein localises to the cell surface. The enzyme catalyses (2R)-2-phosphoglycerate = phosphoenolpyruvate + H2O. It participates in carbohydrate degradation; glycolysis; pyruvate from D-glyceraldehyde 3-phosphate: step 4/5. Its function is as follows. Catalyzes the reversible conversion of 2-phosphoglycerate (2-PG) into phosphoenolpyruvate (PEP). It is essential for the degradation of carbohydrates via glycolysis. This Kineococcus radiotolerans (strain ATCC BAA-149 / DSM 14245 / SRS30216) protein is Enolase.